A 74-amino-acid polypeptide reads, in one-letter code: Large ribosomal subunit protein bL31 (74 aa).

This sequence belongs to the bacterial ribosomal protein bL31 family. Type A subfamily. As to quaternary structure, part of the 50S ribosomal subunit.

Its function is as follows. Binds the 23S rRNA. The chain is Large ribosomal subunit protein bL31 from Afipia carboxidovorans (strain ATCC 49405 / DSM 1227 / KCTC 32145 / OM5) (Oligotropha carboxidovorans).